The following is a 371-amino-acid chain: Queuine tRNA-ribosyltransferase (371 aa).

D90 serves as the catalytic Proton acceptor. Residues 90–94 (DSGGF), D144, Q188, and G215 each bind substrate. Residues 246 to 252 (GVGTPED) form an RNA binding region. The active-site Nucleophile is the D265. The interval 270-274 (TRNAR) is RNA binding; important for wobble base 34 recognition. Zn(2+) contacts are provided by C303, C305, C308, and H334.

This sequence belongs to the queuine tRNA-ribosyltransferase family. As to quaternary structure, homodimer. Within each dimer, one monomer is responsible for RNA recognition and catalysis, while the other monomer binds to the replacement base PreQ1. Requires Zn(2+) as cofactor.

The catalysed reaction is 7-aminomethyl-7-carbaguanine + guanosine(34) in tRNA = 7-aminomethyl-7-carbaguanosine(34) in tRNA + guanine. The protein operates within tRNA modification; tRNA-queuosine biosynthesis. In terms of biological role, catalyzes the base-exchange of a guanine (G) residue with the queuine precursor 7-aminomethyl-7-deazaguanine (PreQ1) at position 34 (anticodon wobble position) in tRNAs with GU(N) anticodons (tRNA-Asp, -Asn, -His and -Tyr). Catalysis occurs through a double-displacement mechanism. The nucleophile active site attacks the C1' of nucleotide 34 to detach the guanine base from the RNA, forming a covalent enzyme-RNA intermediate. The proton acceptor active site deprotonates the incoming PreQ1, allowing a nucleophilic attack on the C1' of the ribose to form the product. After dissociation, two additional enzymatic reactions on the tRNA convert PreQ1 to queuine (Q), resulting in the hypermodified nucleoside queuosine (7-(((4,5-cis-dihydroxy-2-cyclopenten-1-yl)amino)methyl)-7-deazaguanosine). The polypeptide is Queuine tRNA-ribosyltransferase (Neisseria gonorrhoeae (strain NCCP11945)).